The sequence spans 919 residues: Isoleucine--tRNA ligase (919 aa).

The 'HIGH' region signature appears at Pro-57 to Thr-67. Glu-553 is an L-isoleucyl-5'-AMP binding site. The 'KMSKS' region motif lies at Lys-594–Ser-598. Residue Lys-597 coordinates ATP. Zn(2+) contacts are provided by Cys-887, Cys-890, Cys-907, and Cys-910.

Belongs to the class-I aminoacyl-tRNA synthetase family. IleS type 1 subfamily. In terms of assembly, monomer. The cofactor is Zn(2+).

It localises to the cytoplasm. The catalysed reaction is tRNA(Ile) + L-isoleucine + ATP = L-isoleucyl-tRNA(Ile) + AMP + diphosphate. Functionally, catalyzes the attachment of isoleucine to tRNA(Ile). As IleRS can inadvertently accommodate and process structurally similar amino acids such as valine, to avoid such errors it has two additional distinct tRNA(Ile)-dependent editing activities. One activity is designated as 'pretransfer' editing and involves the hydrolysis of activated Val-AMP. The other activity is designated 'posttransfer' editing and involves deacylation of mischarged Val-tRNA(Ile). In Thermotoga maritima (strain ATCC 43589 / DSM 3109 / JCM 10099 / NBRC 100826 / MSB8), this protein is Isoleucine--tRNA ligase.